A 103-amino-acid polypeptide reads, in one-letter code: Large ribosomal subunit protein bL21 (103 aa).

Belongs to the bacterial ribosomal protein bL21 family. As to quaternary structure, part of the 50S ribosomal subunit. Contacts protein L20.

Functionally, this protein binds to 23S rRNA in the presence of protein L20. The chain is Large ribosomal subunit protein bL21 from Azoarcus sp. (strain BH72).